Here is a 301-residue protein sequence, read N- to C-terminus: tRNA pseudouridine synthase B (301 aa).

The active-site Nucleophile is the Asp38.

The protein belongs to the pseudouridine synthase TruB family. Type 1 subfamily.

The catalysed reaction is uridine(55) in tRNA = pseudouridine(55) in tRNA. Responsible for synthesis of pseudouridine from uracil-55 in the psi GC loop of transfer RNAs. This Clostridioides difficile (strain 630) (Peptoclostridium difficile) protein is tRNA pseudouridine synthase B.